Reading from the N-terminus, the 1019-residue chain is Limulus clotting factor C (1019 aa).

Residues 1-25 form the signal peptide; it reads MVLASFLVSGLVLGLLAQKMRPVQS. In terms of domain architecture, EGF-like spans 102 to 137; that stretch reads YGTWCSGECQCKNGGICDQRTGACACRDRYEGVHCE. 17 cysteine pairs are disulfide-bonded: Cys106/Cys118, Cys112/Cys125, Cys127/Cys136, Cys142/Cys182, Cys168/Cys195, Cys199/Cys241, Cys227/Cys254, Cys260/Cys308, Cys294/Cys321, Cys331/Cys350, Cys354/Cys374, Cys436/Cys447, Cys464/Cys564, Cys538/Cys556, Cys576/Cys621, Cys607/Cys634, and Cys720/Cys748. Sushi domains lie at 140 to 197, 198 to 256, and 258 to 323; these read KGCP…KCIR, ECAM…QCKN, and VFCP…SCVK. The LCCL domain occupies 325 to 421; it reads ADREVDCDSK…EELKSLARSF (97 aa). Residues 436 to 568 enclose the C-type lectin domain; sequence CPDGWFEVDE…PSSFACMMDL (133 aa). N-linked (GlcNAc...) asparagine glycans are attached at residues Asn523 and Asn534. Sushi domains follow at residues 574 to 636 and 689 to 750; these read AKCD…RCIK and PRSS…SCIP. 3 N-linked (GlcNAc...) asparagine glycosylation sites follow: Asn624, Asn740, and Asn767. Residues 763–1019 enclose the Peptidase S1 domain; it reads IWNGNSTEIG…VFLSWIRQFI (257 aa). A disulfide bond links Cys794 and Cys810. Catalysis depends on charge relay system residues His809 and Asp865. N-linked (GlcNAc...) asparagine glycosylation occurs at Asn912. Cys932 and Cys951 are oxidised to a cystine. Asp960 is a binding site for substrate. Cys962 and Cys996 form a disulfide bridge. Ser966 serves as the catalytic Charge relay system.

It belongs to the peptidase S1 family. Heterodimer of a light chain and a heavy chain linked by a disulfide bond.

Its subcellular location is the secreted. It carries out the reaction Selective cleavage of 103-Arg-|-Ser-104 and 124-Ile-|-Ile-125 bonds in Limulus clotting factor B to form activated factor B. Cleavage of -Pro-Arg-|-Xaa- bonds in synthetic substrates.. With respect to regulation, activated by Gram-negative bacterial lipopolysaccharides and chymotrypsin. Functionally, this enzyme is closely associated with an endotoxin-sensitive hemolymph coagulation system which may play important roles in both hemostasis and host defense mechanisms. Its active form catalyzes the activation of factor B. The sequence is that of Limulus clotting factor C from Carcinoscorpius rotundicauda (Mangrove horseshoe crab).